Here is a 361-residue protein sequence, read N- to C-terminus: Phospho-N-acetylmuramoyl-pentapeptide-transferase (361 aa).

Helical transmembrane passes span 25–45 (TGGAMVTGALFVFMFGPWIID), 72–92 (TPTMGGLMILSGLTVGTLLWA), 95–115 (LNPYVWIVLAVTLGFGFVGFY), 135–155 (LLIEFTIAGAACFALVWLGRA), 169–189 (VMLNLGWAFVVFGAFVVVGAG), 200–220 (GLAIVPVMIAAASFGLISYLA), 240–260 (LAVLCGALLGAGLGFLWFNAP), 264–284 (IFMGDTGSLALGGMLGSIAVA), 289–309 (IVLAVIGGLFVLEAVSVIVQV), and 338–358 (QIVIRFWIIAVMLALAGLSTL).

It belongs to the glycosyltransferase 4 family. MraY subfamily. Mg(2+) is required as a cofactor.

The protein resides in the cell inner membrane. The enzyme catalyses UDP-N-acetyl-alpha-D-muramoyl-L-alanyl-gamma-D-glutamyl-meso-2,6-diaminopimeloyl-D-alanyl-D-alanine + di-trans,octa-cis-undecaprenyl phosphate = di-trans,octa-cis-undecaprenyl diphospho-N-acetyl-alpha-D-muramoyl-L-alanyl-D-glutamyl-meso-2,6-diaminopimeloyl-D-alanyl-D-alanine + UMP. Its pathway is cell wall biogenesis; peptidoglycan biosynthesis. In terms of biological role, catalyzes the initial step of the lipid cycle reactions in the biosynthesis of the cell wall peptidoglycan: transfers peptidoglycan precursor phospho-MurNAc-pentapeptide from UDP-MurNAc-pentapeptide onto the lipid carrier undecaprenyl phosphate, yielding undecaprenyl-pyrophosphoryl-MurNAc-pentapeptide, known as lipid I. This is Phospho-N-acetylmuramoyl-pentapeptide-transferase from Rhodopseudomonas palustris (strain ATCC BAA-98 / CGA009).